A 427-amino-acid chain; its full sequence is Acetylornithine aminotransferase (427 aa).

Positions 1–23 (MSLQTLIEQATNPPESGSAASSP) are disordered. Residues 124-125 (GA) and F157 contribute to the pyridoxal 5'-phosphate site. Position 160 (R160) interacts with N(2)-acetyl-L-ornithine. Residue 248–251 (DEVQ) coordinates pyridoxal 5'-phosphate. Residue K277 is modified to N6-(pyridoxal phosphate)lysine. S304 serves as a coordination point for N(2)-acetyl-L-ornithine. T305 serves as a coordination point for pyridoxal 5'-phosphate.

It belongs to the class-III pyridoxal-phosphate-dependent aminotransferase family. ArgD subfamily. In terms of assembly, homodimer. Pyridoxal 5'-phosphate is required as a cofactor.

It localises to the cytoplasm. The catalysed reaction is N(2)-acetyl-L-ornithine + 2-oxoglutarate = N-acetyl-L-glutamate 5-semialdehyde + L-glutamate. Its pathway is amino-acid biosynthesis; L-arginine biosynthesis; N(2)-acetyl-L-ornithine from L-glutamate: step 4/4. The polypeptide is Acetylornithine aminotransferase (Nostoc sp. (strain PCC 7120 / SAG 25.82 / UTEX 2576)).